A 297-amino-acid chain; its full sequence is Acetyl-coenzyme A carboxylase carboxyl transferase subunit beta (297 aa).

The disordered stretch occupies residues 1 to 23 (MSWIERILGRTSSSSSSSKSKVP). In terms of domain architecture, CoA carboxyltransferase N-terminal spans 26–295 (VWTKCTSCEQ…PFKTAELIVE (270 aa)). 4 residues coordinate Zn(2+): cysteine 30, cysteine 33, cysteine 49, and cysteine 52. The C4-type zinc-finger motif lies at 30–52 (CTSCEQVLYSEELKRNMHVCPKC).

It belongs to the AccD/PCCB family. Acetyl-CoA carboxylase is a heterohexamer composed of biotin carboxyl carrier protein (AccB), biotin carboxylase (AccC) and two subunits each of ACCase subunit alpha (AccA) and ACCase subunit beta (AccD). The cofactor is Zn(2+).

It is found in the cytoplasm. It catalyses the reaction N(6)-carboxybiotinyl-L-lysyl-[protein] + acetyl-CoA = N(6)-biotinyl-L-lysyl-[protein] + malonyl-CoA. It participates in lipid metabolism; malonyl-CoA biosynthesis; malonyl-CoA from acetyl-CoA: step 1/1. Its function is as follows. Component of the acetyl coenzyme A carboxylase (ACC) complex. Biotin carboxylase (BC) catalyzes the carboxylation of biotin on its carrier protein (BCCP) and then the CO(2) group is transferred by the transcarboxylase to acetyl-CoA to form malonyl-CoA. The polypeptide is Acetyl-coenzyme A carboxylase carboxyl transferase subunit beta (Actinobacillus pleuropneumoniae serotype 5b (strain L20)).